We begin with the raw amino-acid sequence, 212 residues long: MKTLAIDEEQLFLSKTIFEEEVYGEGFSIIAGVDEVGRGPLAGPVVAGACILPRGKIFAGVNDSKKLTPKERGKIRDILLNDPDVCYGIGVVSVERIDEINILEATKEAMAKAIANLSVHPDFLLIDGLHLPHKIPCKKIIKGDSKSASIAAASIIAKEYRDDLMRELHQRYPNYGFDKHKGYGTAAHLAALRAFGPCDCHRKSFAPIRQVV.

The 185-residue stretch at 28-212 folds into the RNase H type-2 domain; that stretch reads SIIAGVDEVG…KSFAPIRQVV (185 aa). 3 residues coordinate a divalent metal cation: D34, E35, and D127.

It belongs to the RNase HII family. The cofactor is Mn(2+). It depends on Mg(2+) as a cofactor.

Its subcellular location is the cytoplasm. The catalysed reaction is Endonucleolytic cleavage to 5'-phosphomonoester.. In terms of biological role, endonuclease that specifically degrades the RNA of RNA-DNA hybrids. This Chlamydia caviae (strain ATCC VR-813 / DSM 19441 / 03DC25 / GPIC) (Chlamydophila caviae) protein is Ribonuclease HII.